The primary structure comprises 349 residues: Succinylglutamate desuccinylase (349 aa).

Zn(2+) contacts are provided by histidine 70, glutamate 73, and histidine 166. The active site involves glutamate 229.

The protein belongs to the AspA/AstE family. Succinylglutamate desuccinylase subfamily. The cofactor is Zn(2+).

It carries out the reaction N-succinyl-L-glutamate + H2O = L-glutamate + succinate. It functions in the pathway amino-acid degradation; L-arginine degradation via AST pathway; L-glutamate and succinate from L-arginine: step 5/5. Transforms N(2)-succinylglutamate into succinate and glutamate. The polypeptide is Succinylglutamate desuccinylase (Burkholderia mallei (strain ATCC 23344)).